A 288-amino-acid polypeptide reads, in one-letter code: Transformer-2 protein homolog beta (288 aa).

Disordered regions lie at residues 1-114 (MSDS…RANP) and 196-225 (TKRPHTPTPGIYMGRPTYGSSRRRDYYDRG). The residue at position 2 (Ser-2) is an N-acetylserine. Residues Ser-2, Ser-4, and Ser-14 each carry the phosphoserine modification. Residues 17–28 (ASRSGSAHGSGK) show a composition bias toward low complexity. The residue at position 29 (Ser-29) is a Phosphoserine. A Phosphothreonine modification is found at Thr-33. A compositionally biased stretch (basic residues) spans 59–109 (RSRRSSRRHYTRSRSRSRSHRRSRSRSYSRDYRRRHSHSHSPMSTRRRHVG). 6 positions are modified to phosphoserine: Ser-83, Ser-85, Ser-87, Ser-95, Ser-97, and Ser-99. A Phosphothreonine modification is found at Thr-103. Residues 118–196 (CCLGVFGLSL…RRIRVDFSIT (79 aa)) enclose the RRM domain. The interval 193-230 (FSITKRPHTPTPGIYMGRPTYGSSRRRDYYDRGYDRGY) is linker. Residue Lys-197 forms a Glycyl lysine isopeptide (Lys-Gly) (interchain with G-Cter in SUMO2) linkage. A phosphothreonine mark is found at Thr-201 and Thr-203. Ser-215 and Ser-237 each carry phosphoserine. Arg-241 carries the post-translational modification Asymmetric dimethylarginine; alternate. Arg-241 is subject to Dimethylated arginine; alternate. Position 241 is an omega-N-methylarginine; alternate (Arg-241). The tract at residues 242-288 (GGGGGGGGWRAAQDRDQIYRRRSPSPYYSRGGYRSRSRSRSYSPRRY) is disordered. Residues 274 to 288 (YRSRSRSRSYSPRRY) are compositionally biased toward basic residues.

The protein belongs to the splicing factor SR family. As to quaternary structure, found in a pre-mRNA exonic splicing enhancer (ESE) complex with TRA2B/SFRS10, SNRNP70, SNRPA1 and SRRM1. Binds to A3 enhancer proteins SFRS4, SFRS5, SFRS6 and SFRS9. Interacts with CPSF6, RBMY1A1, RBMX, RNPS1 and phosphorylated SFRS13A. Interacts with SAFB/SAFB1. Interacts with ILDR1 (via C-terminus) and ILDR2. Phosphorylated in the RS domains.

The protein localises to the nucleus. In terms of biological role, sequence-specific RNA-binding protein which participates in the control of pre-mRNA splicing. Can either activate or suppress exon inclusion. Acts additively with RBMX to promote exon 7 inclusion of the survival motor neuron SMN2. Activates the splicing of MAPT/Tau exon 10. Alters pre-mRNA splicing patterns by antagonizing the effects of splicing regulators, like RBMX. Binds to the AG-rich SE2 domain in the SMN exon 7 RNA. Binds to pre-mRNA. This is Transformer-2 protein homolog beta (TRA2B) from Bos taurus (Bovine).